Reading from the N-terminus, the 976-residue chain is Vacuolar membrane protease (976 aa).

The Cytoplasmic segment spans residues 1-15 (MKLKSVFRSVLKYRK). A helical membrane pass occupies residues 16-36 (TNLSLLLLITYSIITLLYIFD). Residues 37–359 (HERYKLNLPK…KFFVISAKTL (323 aa)) lie on the Vacuolar side of the membrane. N-linked (GlcNAc...) asparagine glycans are attached at residues asparagine 96 and asparagine 121. Zn(2+)-binding residues include histidine 156 and aspartate 168. A glycan (N-linked (GlcNAc...) asparagine) is linked at asparagine 189. Glutamate 200 acts as the Proton acceptor in catalysis. Residue glutamate 201 coordinates Zn(2+). 2 N-linked (GlcNAc...) asparagine glycosylation sites follow: asparagine 212 and asparagine 217. Residues glutamate 226 and histidine 300 each coordinate Zn(2+). Residues 360–380 (FYWNCIFLLVSPVVAIGLYLI) form a helical membrane-spanning segment. At 381 to 392 (SRDRMTWKSHSW) the chain is on the cytoplasmic side. Residues 393–412 (LSWTRFPLSLAAGIIVQKLF) form a helical membrane-spanning segment. Over 413–428 (SNDIIRSNPLTFSRNY) the chain is Vacuolar. Residues 429–449 (FWPISAFFTQVIFTSYVLINC) form a helical membrane-spanning segment. Over 450–461 (SNFFFPCADMKS) the chain is Cytoplasmic. A helical membrane pass occupies residues 462–482 (LSIIELFIILWTILLFTSKLL). The Vacuolar portion of the chain corresponds to 483–496 (YSSDYRYTGLYPLS). A helical membrane pass occupies residues 497–517 (IFFLLSTIAAILRLLALALGM). The Cytoplasmic portion of the chain corresponds to 518 to 627 (RTRKRLGREC…NSLKLEYTDY (110 aa)). Residues 528-610 (RDHHSNYSSH…PLLKGSNSME (83 aa)) are disordered. Polar residues predominate over residues 549 to 558 (NLEQPQDQFT). The segment covering 559-570 (SSQDDQASIQDD) has biased composition (low complexity). Residues 582–601 (NVDEDHGMDSSSQQHDERVP) are compositionally biased toward basic and acidic residues. A helical membrane pass occupies residues 628–648 (AWIIQFLLIVPIPSFILFNSV). Topologically, residues 649 to 668 (DVIMDALNHTVQEGSKATFD) are vacuolar. Asparagine 656 is a glycosylation site (N-linked (GlcNAc...) asparagine). The chain crosses the membrane as a helical span at residues 669 to 689 (VLRFGMVGSILMALPILPFFY). The Cytoplasmic portion of the chain corresponds to 690-692 (KVN). Residues 693-713 (YITISLTALLFLISASKTLLV) form a helical membrane-spanning segment. Over 714–976 (HPFTNSNPLK…LVIVKDAIIL (263 aa)) the chain is Vacuolar. Asparagine 768, asparagine 796, asparagine 811, asparagine 866, and asparagine 937 each carry an N-linked (GlcNAc...) asparagine glycan.

This sequence belongs to the peptidase M28 family. Zn(2+) is required as a cofactor.

The protein localises to the vacuole membrane. Functionally, may be involved in vacuolar sorting and osmoregulation. The protein is Vacuolar membrane protease of Saccharomyces cerevisiae (strain YJM789) (Baker's yeast).